A 283-amino-acid chain; its full sequence is MRYAVVTGVSSGIGKAICEKFLAKGLYVFGSVRKKEDAKYFEEKYPNTFHTLVFDTTDYPAVDKAVEEIHKVVGKKGLSVLVNNAGVAKYGPIQHVPIEELRQQYEVNVFASVYLTQKLLWLLGASKEAKWQGKVIQISSTAGVMTRPMLGPYSSSKHAVEAIYDALRRELMIYGVEVVLIEPGPIKTEIWGKAKSGGNPYKDTDYGEIFAQLDKAVDEIEKIGLPVEAVAGKAWEAFVAKKPKARYVVAPKKLMFKAAMYLIPDRMLDKIFYKDLKKLTQES.

The Proton acceptor role is filled by Tyr153.

It belongs to the short-chain dehydrogenases/reductases (SDR) family.

The enzyme catalyses 3-oxocapnine + NADPH + H(+) = capnine + NADP(+). The protein operates within lipid metabolism. Its function is as follows. Reductase involved in the biosynthesis of capnine, a sulfonolipid present in the outer membrane of gliding Bacteroidetes and essential for gliding motility. Catalyzes the reduction of 3-dehydrocapnine to capnine. This chain is NADPH-dependent 3-dehydrocapnine reductase, found in Ornithobacterium rhinotracheale.